A 210-amino-acid polypeptide reads, in one-letter code: LexA repressor (210 aa).

Residues 29–49 (VREIGEAVDLSSTSTVHGHIS) constitute a DNA-binding region (H-T-H motif). Residues Ser-130 and Lys-168 each act as for autocatalytic cleavage activity in the active site.

Belongs to the peptidase S24 family. Homodimer.

The enzyme catalyses Hydrolysis of Ala-|-Gly bond in repressor LexA.. Represses a number of genes involved in the response to DNA damage (SOS response), including recA and lexA. In the presence of single-stranded DNA, RecA interacts with LexA causing an autocatalytic cleavage which disrupts the DNA-binding part of LexA, leading to derepression of the SOS regulon and eventually DNA repair. This is LexA repressor from Lactiplantibacillus plantarum (strain ATCC BAA-793 / NCIMB 8826 / WCFS1) (Lactobacillus plantarum).